The primary structure comprises 147 residues: Large ribosomal subunit protein uL13 (147 aa).

The protein belongs to the universal ribosomal protein uL13 family. Part of the 50S ribosomal subunit.

This protein is one of the early assembly proteins of the 50S ribosomal subunit, although it is not seen to bind rRNA by itself. It is important during the early stages of 50S assembly. This Deinococcus geothermalis (strain DSM 11300 / CIP 105573 / AG-3a) protein is Large ribosomal subunit protein uL13.